The sequence spans 852 residues: Disks large homolog 2 (852 aa).

Residues Cys5 and Cys7 are each lipidated (S-palmitoyl cysteine). Ser28 is subject to Phosphoserine. The residue at position 58 (Tyr58) is a Phosphotyrosine. Position 65 is a phosphoserine (Ser65). 2 consecutive PDZ domains span residues 98–184 (EITL…VRRR) and 193–279 (EIKL…VGKP). A phosphoserine mark is found at Ser307, Ser328, Ser360, Ser365, Ser406, and Ser414. Residues 421 to 501 (KVVLHKGSTG…QTVTIIAQYQ (81 aa)) enclose the PDZ 3 domain. Tyr505 is subject to Phosphotyrosine. Residues Ser528, Ser530, and Ser553 each carry the phosphoserine modification. The SH3 domain maps to 536–606 (KRSLYVRAMF…PSKRRVERKE (71 aa)). A Guanylate kinase-like domain is found at 662–837 (TRPVIILGPM…IYNQCKLVIE (176 aa)). Phosphotyrosine occurs at positions 732 and 737.

This sequence belongs to the MAGUK family. As to quaternary structure, interacts through its PDZ domains with NETO1. Interacts with NOS1/nNOS through second PDZ domain. Interacts with KCNJ2/Kir2.1 (via C-terminus) through one of its PDZ domains. Interacts with KCNJ4. Interacts with FRMPD4 (via C-terminus). Interacts with LRFN1. Interacts with LRFN2 and LRFN4. Interacts with FASLG. Interacts with ADAM22. Interacts with DGKI (via PDZ-binding motif). Palmitoylation of isoform 1 and isoform 2 is not required for targeting to postsynaptic density. As to expression, detected in juxtaparanodal zones in the central nervous system and at nerve terminal plexuses of basket cells in the cerebellum (at protein level). Brain. High levels in cerebellar Purkinje cells. Expressed in pyramidal cells of the Ammons's horn and granular cells of the dentate gyrus in the hippocampus as well as cerebral cortex and striatum. High levels in dorsal horn of spinal cord.

The protein resides in the cell membrane. It is found in the postsynaptic density. Its subcellular location is the synapse. It localises to the cell projection. The protein localises to the axon. The protein resides in the membrane. It is found in the perikaryon. In terms of biological role, required for perception of chronic pain through NMDA receptor signaling. Regulates surface expression of NMDA receptors in dorsal horn neurons of the spinal cord. Interacts with the cytoplasmic tail of NMDA receptor subunits as well as inward rectifying potassium channels. Involved in regulation of synaptic stability at cholinergic synapses. Part of the postsynaptic protein scaffold of excitatory synapses. This chain is Disks large homolog 2 (Dlg2), found in Rattus norvegicus (Rat).